Here is a 252-residue protein sequence, read N- to C-terminus: 2-succinyl-6-hydroxy-2,4-cyclohexadiene-1-carboxylate synthase (252 aa).

It belongs to the AB hydrolase superfamily. MenH family. Monomer.

The catalysed reaction is 5-enolpyruvoyl-6-hydroxy-2-succinyl-cyclohex-3-ene-1-carboxylate = (1R,6R)-6-hydroxy-2-succinyl-cyclohexa-2,4-diene-1-carboxylate + pyruvate. The protein operates within quinol/quinone metabolism; 1,4-dihydroxy-2-naphthoate biosynthesis; 1,4-dihydroxy-2-naphthoate from chorismate: step 3/7. It participates in quinol/quinone metabolism; menaquinone biosynthesis. Its function is as follows. Catalyzes a proton abstraction reaction that results in 2,5-elimination of pyruvate from 2-succinyl-5-enolpyruvyl-6-hydroxy-3-cyclohexene-1-carboxylate (SEPHCHC) and the formation of 2-succinyl-6-hydroxy-2,4-cyclohexadiene-1-carboxylate (SHCHC). This is 2-succinyl-6-hydroxy-2,4-cyclohexadiene-1-carboxylate synthase from Klebsiella pneumoniae subsp. pneumoniae (strain ATCC 700721 / MGH 78578).